The sequence spans 445 residues: 3-phosphoshikimate 1-carboxyvinyltransferase (445 aa).

The interval 1–25 (MSHSDQTSPLEARKSAALSGTARVP) is disordered. The 3-phosphoshikimate site is built by Lys-28, Ser-29, and Arg-33. Lys-28 serves as a coordination point for phosphoenolpyruvate. Phosphoenolpyruvate contacts are provided by Gly-101 and Arg-129. Residues Ser-175, Gln-177, Asp-328, and Lys-355 each contribute to the 3-phosphoshikimate site. A phosphoenolpyruvate-binding site is contributed by Gln-177. Asp-328 functions as the Proton acceptor in the catalytic mechanism. Positions 359 and 402 each coordinate phosphoenolpyruvate.

It belongs to the EPSP synthase family. In terms of assembly, monomer.

The protein resides in the cytoplasm. The catalysed reaction is 3-phosphoshikimate + phosphoenolpyruvate = 5-O-(1-carboxyvinyl)-3-phosphoshikimate + phosphate. The protein operates within metabolic intermediate biosynthesis; chorismate biosynthesis; chorismate from D-erythrose 4-phosphate and phosphoenolpyruvate: step 6/7. In terms of biological role, catalyzes the transfer of the enolpyruvyl moiety of phosphoenolpyruvate (PEP) to the 5-hydroxyl of shikimate-3-phosphate (S3P) to produce enolpyruvyl shikimate-3-phosphate and inorganic phosphate. The chain is 3-phosphoshikimate 1-carboxyvinyltransferase from Rhodopseudomonas palustris (strain BisB5).